The primary structure comprises 457 residues: Ribosomal protein uS12 methylthiotransferase RimO (457 aa).

Residues 6-116 (PKVGFVSLGC…VMEAVHAALP (111 aa)) form the MTTase N-terminal domain. Residues Cys-15, Cys-51, Cys-80, Cys-147, Cys-151, and Cys-154 each contribute to the [4Fe-4S] cluster site. One can recognise a Radical SAM core domain in the interval 133–371 (LTPRHYAYLK…AKQAQISALR (239 aa)). The region spanning 373–441 (ESKIGSVQQC…EHDLFGDALP (69 aa)) is the TRAM domain.

The protein belongs to the methylthiotransferase family. RimO subfamily. [4Fe-4S] cluster serves as cofactor.

It is found in the cytoplasm. The catalysed reaction is L-aspartate(89)-[ribosomal protein uS12]-hydrogen + (sulfur carrier)-SH + AH2 + 2 S-adenosyl-L-methionine = 3-methylsulfanyl-L-aspartate(89)-[ribosomal protein uS12]-hydrogen + (sulfur carrier)-H + 5'-deoxyadenosine + L-methionine + A + S-adenosyl-L-homocysteine + 2 H(+). Catalyzes the methylthiolation of an aspartic acid residue of ribosomal protein uS12. The chain is Ribosomal protein uS12 methylthiotransferase RimO from Xanthomonas axonopodis pv. citri (strain 306).